Reading from the N-terminus, the 836-residue chain is Lon protease (836 aa).

A Lon N-terminal domain is found at 41–233 (LPVLPLRNTV…RLIHFLNREV (193 aa)). Position 385–392 (385–392 (GPPGVGKT)) interacts with ATP. Residues 627 to 811 (VMLSGVAVGL…DDLIDYVLEP (185 aa)) enclose the Lon proteolytic domain. Catalysis depends on residues S714 and K757. A disordered region spans residues 816 to 836 (APQFKVEDKDHTPETTGNESE).

The protein belongs to the peptidase S16 family. In terms of assembly, homohexamer. Organized in a ring with a central cavity.

It is found in the cytoplasm. The enzyme catalyses Hydrolysis of proteins in presence of ATP.. In terms of biological role, ATP-dependent serine protease that mediates the selective degradation of mutant and abnormal proteins as well as certain short-lived regulatory proteins. Required for cellular homeostasis and for survival from DNA damage and developmental changes induced by stress. Degrades polypeptides processively to yield small peptide fragments that are 5 to 10 amino acids long. Binds to DNA in a double-stranded, site-specific manner. This Chloroherpeton thalassium (strain ATCC 35110 / GB-78) protein is Lon protease.